Reading from the N-terminus, the 250-residue chain is MGRGRVQLKRIENKINRQVTFSKRRSGLLKKAHEISVLCDAEVGLIVFSTKGKLFEYANDSCMERLLERYERYSFAERQLVPTDHTSPGSWTLEHAKLKARLEVLQRNQKHYVGEDLESLNMKELQNLEHQLDSALKHIRSRKNQLMHESISVLQKQDRALQEQNNQLSKKVKEREKEVAQQNQWDQQNHEINSSTFVLPQQLDSPHLGEAYQNTNVVDNGEVEGGNSSQQQGAANNTVMPQWMLRHLNG.

An MADS-box domain is found at 3–57 (RGRVQLKRIENKINRQVTFSKRRSGLLKKAHEISVLCDAEVGLIVFSTKGKLFEY). A K-box domain is found at 88–178 (PGSWTLEHAK…SKKVKEREKE (91 aa)).

As to expression, abundant in vegetative organs.

The protein localises to the nucleus. In terms of biological role, probable transcription factor. This chain is Agamous-like MADS-box protein AGL8 homolog, found in Solanum tuberosum (Potato).